A 457-amino-acid chain; its full sequence is ATP synthase subunit beta (457 aa).

147–154 (GGAGVGKT) contributes to the ATP binding site.

The protein belongs to the ATPase alpha/beta chains family. In terms of assembly, F-type ATPases have 2 components, CF(1) - the catalytic core - and CF(0) - the membrane proton channel. CF(1) has five subunits: alpha(3), beta(3), gamma(1), delta(1), epsilon(1). CF(0) has three main subunits: a(1), b(2) and c(9-12). The alpha and beta chains form an alternating ring which encloses part of the gamma chain. CF(1) is attached to CF(0) by a central stalk formed by the gamma and epsilon chains, while a peripheral stalk is formed by the delta and b chains.

The protein resides in the cell inner membrane. It carries out the reaction ATP + H2O + 4 H(+)(in) = ADP + phosphate + 5 H(+)(out). In terms of biological role, produces ATP from ADP in the presence of a proton gradient across the membrane. The catalytic sites are hosted primarily by the beta subunits. The sequence is that of ATP synthase subunit beta from Haemophilus ducreyi (strain 35000HP / ATCC 700724).